The chain runs to 355 residues: Protein-glutamate methylesterase/protein-glutamine glutaminase (355 aa).

The Response regulatory domain occupies 4 to 121 (KVLIIDDSAL…ANGMHEYSEM (118 aa)). Asp55 carries the 4-aspartylphosphate modification. The 193-residue stretch at 156–348 (LISSEKLIII…GRVLQYLAAN (193 aa)) folds into the CheB-type methylesterase domain. Residues Ser168, His194, and Asp290 contribute to the active site.

This sequence belongs to the CheB family. Post-translationally, phosphorylated by CheA. Phosphorylation of the N-terminal regulatory domain activates the methylesterase activity.

The protein resides in the cytoplasm. The catalysed reaction is [protein]-L-glutamate 5-O-methyl ester + H2O = L-glutamyl-[protein] + methanol + H(+). It carries out the reaction L-glutaminyl-[protein] + H2O = L-glutamyl-[protein] + NH4(+). Functionally, involved in chemotaxis. Part of a chemotaxis signal transduction system that modulates chemotaxis in response to various stimuli. Catalyzes the demethylation of specific methylglutamate residues introduced into the chemoreceptors (methyl-accepting chemotaxis proteins or MCP) by CheR. Also mediates the irreversible deamidation of specific glutamine residues to glutamic acid. The chain is Protein-glutamate methylesterase/protein-glutamine glutaminase from Methylobacillus flagellatus (strain ATCC 51484 / DSM 6875 / VKM B-1610 / KT).